The chain runs to 562 residues: NAD-dependent malic enzyme (562 aa).

The active-site Proton donor is tyrosine 101. Residue arginine 154 coordinates NAD(+). Lysine 172 acts as the Proton acceptor in catalysis. Positions 243, 244, and 267 each coordinate a divalent metal cation. Residues aspartate 267 and asparagine 415 each contribute to the NAD(+) site.

The protein belongs to the malic enzymes family. Homotetramer. Mg(2+) is required as a cofactor. The cofactor is Mn(2+).

It carries out the reaction (S)-malate + NAD(+) = pyruvate + CO2 + NADH. It catalyses the reaction oxaloacetate + H(+) = pyruvate + CO2. The protein is NAD-dependent malic enzyme of Shewanella sp. (strain MR-4).